The sequence spans 423 residues: Serine hydroxymethyltransferase (423 aa).

119–121 (GHI) serves as a coordination point for (6S)-5,6,7,8-tetrahydrofolate. Residue Lys225 is modified to N6-(pyridoxal phosphate)lysine.

The protein belongs to the SHMT family. In terms of assembly, homodimer. Pyridoxal 5'-phosphate is required as a cofactor.

It localises to the cytoplasm. It carries out the reaction (6R)-5,10-methylene-5,6,7,8-tetrahydrofolate + glycine + H2O = (6S)-5,6,7,8-tetrahydrofolate + L-serine. Its pathway is one-carbon metabolism; tetrahydrofolate interconversion. The protein operates within amino-acid biosynthesis; glycine biosynthesis; glycine from L-serine: step 1/1. In terms of biological role, catalyzes the reversible interconversion of serine and glycine with tetrahydrofolate (THF) serving as the one-carbon carrier. Also exhibits THF-independent aldolase activity toward beta-hydroxyamino acids, producing glycine and aldehydes, via a retro-aldol mechanism. This chain is Serine hydroxymethyltransferase, found in Methanocella arvoryzae (strain DSM 22066 / NBRC 105507 / MRE50).